Here is a 358-residue protein sequence, read N- to C-terminus: 3-dehydroquinate synthase (358 aa).

Residues 75–80 (SGEGSK), 109–113 (GVLGD), 133–134 (TT), Lys-146, and Lys-155 contribute to the NAD(+) site. Positions 188, 245, and 262 each coordinate Zn(2+).

The protein belongs to the sugar phosphate cyclases superfamily. Dehydroquinate synthase family. Co(2+) serves as cofactor. It depends on Zn(2+) as a cofactor. Requires NAD(+) as cofactor.

Its subcellular location is the cytoplasm. The catalysed reaction is 7-phospho-2-dehydro-3-deoxy-D-arabino-heptonate = 3-dehydroquinate + phosphate. It functions in the pathway metabolic intermediate biosynthesis; chorismate biosynthesis; chorismate from D-erythrose 4-phosphate and phosphoenolpyruvate: step 2/7. Catalyzes the conversion of 3-deoxy-D-arabino-heptulosonate 7-phosphate (DAHP) to dehydroquinate (DHQ). The sequence is that of 3-dehydroquinate synthase from Methylacidiphilum infernorum (isolate V4) (Methylokorus infernorum (strain V4)).